Here is a 236-residue protein sequence, read N- to C-terminus: Small ribosomal subunit protein uS2c (236 aa).

Belongs to the universal ribosomal protein uS2 family.

The protein localises to the plastid. It is found in the chloroplast. The chain is Small ribosomal subunit protein uS2c (rps2) from Oryza sativa (Rice).